The following is a 344-amino-acid chain: Anthranilate phosphoribosyltransferase (344 aa).

5-phospho-alpha-D-ribose 1-diphosphate-binding positions include Gly83, Gly86–Asp87, Thr91, Asn93–Thr96, Lys111–Ser119, and Ser123. Residue Gly83 coordinates anthranilate. Ser95 is a Mg(2+) binding site. Position 169 (Arg169) interacts with anthranilate. The Mg(2+) site is built by Asp228 and Glu229.

It belongs to the anthranilate phosphoribosyltransferase family. In terms of assembly, homodimer. The cofactor is Mg(2+).

It catalyses the reaction N-(5-phospho-beta-D-ribosyl)anthranilate + diphosphate = 5-phospho-alpha-D-ribose 1-diphosphate + anthranilate. It participates in amino-acid biosynthesis; L-tryptophan biosynthesis; L-tryptophan from chorismate: step 2/5. Catalyzes the transfer of the phosphoribosyl group of 5-phosphorylribose-1-pyrophosphate (PRPP) to anthranilate to yield N-(5'-phosphoribosyl)-anthranilate (PRA). The polypeptide is Anthranilate phosphoribosyltransferase (Methylibium petroleiphilum (strain ATCC BAA-1232 / LMG 22953 / PM1)).